A 118-amino-acid chain; its full sequence is Small ribosomal subunit protein uS13 (118 aa).

This sequence belongs to the universal ribosomal protein uS13 family. Part of the 30S ribosomal subunit. Forms a loose heterodimer with protein S19. Forms two bridges to the 50S subunit in the 70S ribosome.

Functionally, located at the top of the head of the 30S subunit, it contacts several helices of the 16S rRNA. In the 70S ribosome it contacts the 23S rRNA (bridge B1a) and protein L5 of the 50S subunit (bridge B1b), connecting the 2 subunits; these bridges are implicated in subunit movement. Contacts the tRNAs in the A and P-sites. This Carsonella ruddii (strain PV) protein is Small ribosomal subunit protein uS13.